The primary structure comprises 329 residues: MSAEPEGRRMLRLEVRNAQTPIERKPEWIKTRATMGPEYRQLHSLVKSEGLHTVCQEAGCPNIYECWEDREATFLIGGSQCTRRCDFCQIDTGKPAEFDRDEPRRVAESVARMGLRYSTVTGVARDDLEDEGAWLYAETIREIHRQSPGTGVEILVPDFSGDPELLGEVFGARPEVFAHNVETVPRIFKRIRPAFRYERSLDVIAQGRAAGLITKSNLILGMGEERQEISQALQDLHDAGTDIITITQYLRPSPRHLPVARWVRPDEFVELRDEAEAIGFLGVLAGPLVRSSYRAGRLWAQSMRAKGRTVPEELRHLADASLGFAQAVS.

Residues C55, C60, C66, C81, C85, C88, and S292 each contribute to the [4Fe-4S] cluster site. Residues 67-281 (WEDREATFLI…RDEAEAIGFL (215 aa)) enclose the Radical SAM core domain.

This sequence belongs to the radical SAM superfamily. Lipoyl synthase family. It depends on [4Fe-4S] cluster as a cofactor.

It localises to the cytoplasm. It carries out the reaction [[Fe-S] cluster scaffold protein carrying a second [4Fe-4S](2+) cluster] + N(6)-octanoyl-L-lysyl-[protein] + 2 oxidized [2Fe-2S]-[ferredoxin] + 2 S-adenosyl-L-methionine + 4 H(+) = [[Fe-S] cluster scaffold protein] + N(6)-[(R)-dihydrolipoyl]-L-lysyl-[protein] + 4 Fe(3+) + 2 hydrogen sulfide + 2 5'-deoxyadenosine + 2 L-methionine + 2 reduced [2Fe-2S]-[ferredoxin]. The protein operates within protein modification; protein lipoylation via endogenous pathway; protein N(6)-(lipoyl)lysine from octanoyl-[acyl-carrier-protein]: step 2/2. Functionally, catalyzes the radical-mediated insertion of two sulfur atoms into the C-6 and C-8 positions of the octanoyl moiety bound to the lipoyl domains of lipoate-dependent enzymes, thereby converting the octanoylated domains into lipoylated derivatives. This is Lipoyl synthase from Leifsonia xyli subsp. xyli (strain CTCB07).